A 356-amino-acid polypeptide reads, in one-letter code: MAGLALYCRTGFEKDLANEVVEKCAELNVYGYPELKTNSGLVLFQCYQAEDADKLAKTLPLTTLIFARQLFAFSERCEQLDTSDRIGPILNGCIEFPECGELRVEHADSTQGREISKFCRKISVPLRQALRGKRILTPLERSNLPVCHVYFEDSTTAIVGYSYPANNSSYPLGILRLKFPNEAPSRSTLKLDEAFQLFIPKKEQAKRLSGGLHAVDLGACPGGWTYQLVKRGMFVEAVDNGAMDEALMATGQVRYCPEDGFKFQPRKNNVYWLVCDMIEQPQRVAKLMATWIATKRCQETVFNLKLPMKKRYESVKEALQIIDQCIDQHRAGPYDLKVKHLYHDREEVTVHMRLNT.

S-adenosyl-L-methionine-binding positions include Ser187, 220–223, Asp239, Asp259, and Asp276; that span reads CPGG. Lys305 serves as the catalytic Proton acceptor.

It belongs to the class I-like SAM-binding methyltransferase superfamily. RNA methyltransferase RlmE family. RlmM subfamily. In terms of assembly, monomer.

It is found in the cytoplasm. The enzyme catalyses cytidine(2498) in 23S rRNA + S-adenosyl-L-methionine = 2'-O-methylcytidine(2498) in 23S rRNA + S-adenosyl-L-homocysteine + H(+). Functionally, catalyzes the 2'-O-methylation at nucleotide C2498 in 23S rRNA. This is Ribosomal RNA large subunit methyltransferase M from Pseudoalteromonas atlantica (strain T6c / ATCC BAA-1087).